The sequence spans 209 residues: MDPFLVLLHSVSAGLSSSDLTQLKFLCQNHISKRKLELAQSGLDLFTVLLQQNELNAEHTALLRELLCSLRRKDLLLRLDDFERGAAGGAAPEDRDLRAAMEIICDNVGKDWRRLARHLGVSDVKIEAIEEKYPRNLAEQVRELLRVWKNSTRENAAVSCLVGALRGCQLNVVADLIEEDQRARALQSGSANPGSFTAWDSGSAAPGAS.

Residues Pro-3–Asp-81 enclose the DED domain. The Death domain maps to Leu-97–Gln-181. The segment covering Gln-187 to Asp-200 has biased composition (polar residues). The segment at Gln-187 to Ser-209 is disordered.

Can self-associate. Component of the AIM2 PANoptosome complex, a multiprotein complex that drives inflammatory cell death (PANoptosis). Component of the death-induced signaling complex (DISC) composed of cell surface receptor FAS/CD95 or TNFRSF1A, adapter protein FADD and the CASP8 protease; recruitment of CASP8 to the complex is required for processing of CASP8 into the p18 and p10 subunits. Interacts (via death domain) with FAS (via death domain). Interacts directly (via DED domain) with NOL3 (via CARD domain); inhibits death-inducing signaling complex (DISC) assembly by inhibiting the increase in FAS-FADD binding induced by FAS activation. Interacts with CFLAR, PEA15 and MBD4. When phosphorylated, part of a complex containing HIPK3 and FAS. May interact with MAVS/IPS1. Interacts with MOCV v-CFLAR protein and PIDD1. Interacts with RIPK1 and TRADD. Interacts with stimulated TNFRSF10B. Interacts with DDX24. Phosphorylated.

Its subcellular location is the cytoplasm. Its function is as follows. Apoptotic adapter molecule that recruits caspases CASP8 or CASP10 to the activated FAS/CD95 or TNFRSF1A/TNFR-1 receptors. The resulting aggregate called the death-inducing signaling complex (DISC) performs CASP8 proteolytic activation. Active CASP8 initiates the subsequent cascade of caspases mediating apoptosis. Involved in interferon-mediated antiviral immune response, playing a role in the positive regulation of interferon signaling. The protein is FAS-associated death domain protein of Bos taurus (Bovine).